A 570-amino-acid chain; its full sequence is Probable metalloreductase AIM14 (570 aa).

7 helical membrane passes run 21-41, 70-90, 101-118, 142-162, 177-197, 204-224, and 230-250; these read IKYG…LALL, AIHL…HYSL, LGRL…LTLR, IITV…AIDD, FVGF…IGPM, LFYI…PIHS, and FPFL…RIVF. The 119-residue stretch at 101–219 folds into the Ferric oxidoreductase domain; sequence LGRLSYALIP…NLVNVAFILL (119 aa). One can recognise an FAD-binding FR-type domain in the interval 250-388; that stretch reads FAKSLMILNK…GGSGISFALP (139 aa). The disordered stretch occupies residues 480–507; it reads ISNFNSENADSNDKTPETSHSPTKENGS.

The protein belongs to the ferric reductase (FRE) family. AIM14 subfamily. As to quaternary structure, interacts with ribosomes.

It localises to the membrane. Functionally, probable cell surface metalloreductase. May be involved in iron or copper homeostasis. The sequence is that of Probable metalloreductase AIM14 (AIM14) from Saccharomyces cerevisiae (strain JAY291) (Baker's yeast).